Consider the following 120-residue polypeptide: MLSARNRMRRSTEFDATVRQGVRTVQPDVIVHVRRAKECAADSSPRVGLIIAKSVGTAVERHRVARRLRHVARPMLMNLHPCDRVVIRALPSSRHVSSAWLEQQLRSGLRRAFESAGADR.

It belongs to the RnpA family. In terms of assembly, consists of a catalytic RNA component (M1 or rnpB) and a protein subunit.

The catalysed reaction is Endonucleolytic cleavage of RNA, removing 5'-extranucleotides from tRNA precursor.. Its function is as follows. RNaseP catalyzes the removal of the 5'-leader sequence from pre-tRNA to produce the mature 5'-terminus. It can also cleave other RNA substrates such as 4.5S RNA. The protein component plays an auxiliary but essential role in vivo by binding to the 5'-leader sequence and broadening the substrate specificity of the ribozyme. In Mycobacterium marinum (strain ATCC BAA-535 / M), this protein is Ribonuclease P protein component.